Here is a 213-residue protein sequence, read N- to C-terminus: ATP-dependent dethiobiotin synthetase BioD (213 aa).

12–17 (NVGKTF) contributes to the ATP binding site. T16 contributes to the Mg(2+) binding site. The active site involves K36. S40 is a substrate binding site. ATP is bound by residues D53, 110–113 (EGTG), and 170–171 (NQ). Positions 53 and 110 each coordinate Mg(2+).

The protein belongs to the dethiobiotin synthetase family. As to quaternary structure, homodimer. Mg(2+) serves as cofactor.

It localises to the cytoplasm. The enzyme catalyses (7R,8S)-7,8-diammoniononanoate + CO2 + ATP = (4R,5S)-dethiobiotin + ADP + phosphate + 3 H(+). The protein operates within cofactor biosynthesis; biotin biosynthesis; biotin from 7,8-diaminononanoate: step 1/2. Its function is as follows. Catalyzes a mechanistically unusual reaction, the ATP-dependent insertion of CO2 between the N7 and N8 nitrogen atoms of 7,8-diaminopelargonic acid (DAPA, also called 7,8-diammoniononanoate) to form a ureido ring. The chain is ATP-dependent dethiobiotin synthetase BioD from Ruthia magnifica subsp. Calyptogena magnifica.